We begin with the raw amino-acid sequence, 392 residues long: Nucleolysin TIAR (392 aa).

RRM domains are found at residues arginine 9–threonine 102 and phenylalanine 114–arginine 192. Lysine 139 is subject to N6-acetyllysine. Phosphoserine is present on serine 218. One can recognise an RRM 3 domain in the interval cysteine 222 to glutamate 294. Positions glycine 363–glutamine 392 are disordered. The span at glycine 369–asparagine 380 shows a compositional bias: pro residues.

Interacts with FASTK. In terms of processing, phosphorylated by MAPK14 following DNA damage, releasing TIAR from GADD45A mRNA. Expressed both in primordial germ cells (PGCs) and in neighboring somatic cells.

The protein resides in the nucleus. It localises to the cytoplasm. It is found in the stress granule. The protein localises to the cytolytic granule. Its function is as follows. RNA-binding protein involved in alternative pre-RNA splicing and in cytoplasmic stress granules formation. Shows a preference for uridine-rich RNAs. Activates splicing of alternative exons with weak 5' splice sites followed by a U-rich stretch on its own pre-mRNA and on TIA1 mRNA. Promotes the inclusion of TIA1 exon 5 to give rise to the long isoform (isoform a) of TIA1. Acts downstream of the stress-induced phosphorylation of EIF2S1/EIF2A to promote the recruitment of untranslated mRNAs to cytoplasmic stress granules (SG). Possesses nucleolytic activity against cytotoxic lymphocyte target cells. May be involved in apoptosis. The sequence is that of Nucleolysin TIAR (Tial1) from Mus musculus (Mouse).